The primary structure comprises 347 residues: GMP reductase (347 aa).

108–131 contacts NADP(+); it reads TDFEKTKQILIANPALNFLCIDVA. K(+)-binding residues include glycine 181 and glycine 183. Residue cysteine 186 is the Thioimidate intermediate of the active site. 216 to 239 serves as a coordination point for NADP(+); that stretch reads IISDGGCTMPGDVAKAFGGGADFV.

This sequence belongs to the IMPDH/GMPR family. GuaC type 1 subfamily. As to quaternary structure, homotetramer.

It catalyses the reaction IMP + NH4(+) + NADP(+) = GMP + NADPH + 2 H(+). Its function is as follows. Catalyzes the irreversible NADPH-dependent deamination of GMP to IMP. It functions in the conversion of nucleobase, nucleoside and nucleotide derivatives of G to A nucleotides, and in maintaining the intracellular balance of A and G nucleotides. The protein is GMP reductase of Enterobacter sp. (strain 638).